The following is a 192-amino-acid chain: Ion-translocating oxidoreductase complex subunit B (192 aa).

The tract at residues 1–26 (MNAIWIAVAAVSLLGLAFGAILGYAS) is hydrophobic. A 4Fe-4S domain is found at 32–91 (EDDPVVEKIDEILPQSQCGQCGYPGCRPYAEAISCNGEKINRCAPGGEAVMLKIAELLNV). 12 residues coordinate [4Fe-4S] cluster: cysteine 49, cysteine 52, cysteine 57, cysteine 74, cysteine 117, cysteine 120, cysteine 123, cysteine 127, cysteine 147, cysteine 150, cysteine 153, and cysteine 157. 2 4Fe-4S ferredoxin-type domains span residues 108-137 (MVAFIDENNCIGCTKCIQACPVDAIVGATR) and 138-167 (AMHTVMSDLCTGCNLCVDPCPTHCISLQPV).

It belongs to the 4Fe4S bacterial-type ferredoxin family. RnfB subfamily. In terms of assembly, the complex is composed of six subunits: RsxA, RsxB, RsxC, RsxD, RsxE and RsxG. Requires [4Fe-4S] cluster as cofactor.

It is found in the cell inner membrane. Functionally, part of a membrane-bound complex that couples electron transfer with translocation of ions across the membrane. Required to maintain the reduced state of SoxR. This is Ion-translocating oxidoreductase complex subunit B from Escherichia coli O17:K52:H18 (strain UMN026 / ExPEC).